The sequence spans 307 residues: MTKTRCMHVHFRKILQRVKKTLRLSASDQQSQGVTEPLSLGDLPEECISLIISFTSPRDACVFALVSKTFESAVQSDIVWEKFIPPEYESLLSRSQHFSSKKELFFALCDESVLINVSKKDLWIEKATGKRCMMLSASALNLSTHHTWKWITNPVSAWLETVPELLTTRWFEIRCRTNTRFLSPRTRYSVYIVFLKADICYGFAYVAMEAVVRMVGHELSESCRRYVCFHEAMEWQFLTRKNLVNPERREDGWMEIEIGEFFNEGAFRNNDEIEMSVSETTQRNTKRGLIIQGIEIRPTKKPGNEMP.

An F-box domain is found at 37 to 83 (PLSLGDLPEECISLIISFTSPRDACVFALVSKTFESAVQSDIVWEKF).

The sequence is that of F-box protein PP2-B7 (PP2B7) from Arabidopsis thaliana (Mouse-ear cress).